Consider the following 143-residue polypeptide: Lysozyme C (143 aa).

A signal peptide spans 1–15 (MRCLLLLLLVPVPGA). The region spanning 16–143 (KVFERCEWAR…LSSYVAGCGV (128 aa)) is the C-type lysozyme domain. 4 disulfides stabilise this stretch: C21/C141, C45/C129, C79/C94, and C90/C108. Residues E50 and D67 contribute to the active site.

Belongs to the glycosyl hydrolase 22 family. As to quaternary structure, monomer.

The protein localises to the secreted. It carries out the reaction Hydrolysis of (1-&gt;4)-beta-linkages between N-acetylmuramic acid and N-acetyl-D-glucosamine residues in a peptidoglycan and between N-acetyl-D-glucosamine residues in chitodextrins.. Lysozymes have primarily a bacteriolytic function; those in tissues and body fluids are associated with the monocyte-macrophage system and enhance the activity of immunoagents. This chain is Lysozyme C (lys), found in Scophthalmus maximus (Turbot).